The following is a 957-amino-acid chain: Glycine dehydrogenase (decarboxylating) (957 aa).

Position 708 is an N6-(pyridoxal phosphate)lysine (K708).

Belongs to the GcvP family. In terms of assembly, the glycine cleavage system is composed of four proteins: P, T, L and H. Pyridoxal 5'-phosphate serves as cofactor.

The enzyme catalyses N(6)-[(R)-lipoyl]-L-lysyl-[glycine-cleavage complex H protein] + glycine + H(+) = N(6)-[(R)-S(8)-aminomethyldihydrolipoyl]-L-lysyl-[glycine-cleavage complex H protein] + CO2. Its function is as follows. The glycine cleavage system catalyzes the degradation of glycine. The P protein binds the alpha-amino group of glycine through its pyridoxal phosphate cofactor; CO(2) is released and the remaining methylamine moiety is then transferred to the lipoamide cofactor of the H protein. The polypeptide is Glycine dehydrogenase (decarboxylating) (Salmonella heidelberg (strain SL476)).